A 218-amino-acid chain; its full sequence is UPF0758 protein SAUSA300_1608 (218 aa).

The MPN domain maps to 92 to 214 (KITQPSDVAD…FTSLVEAGYF (123 aa)). Zn(2+)-binding residues include H163, H165, and D176. The JAMM motif motif lies at 163-176 (HNHPSGDVTPSQED).

It belongs to the UPF0758 family.

This is UPF0758 protein SAUSA300_1608 from Staphylococcus aureus (strain USA300).